The chain runs to 114 residues: Large ribosomal subunit protein bL20 (114 aa).

It belongs to the bacterial ribosomal protein bL20 family.

In terms of biological role, binds directly to 23S ribosomal RNA and is necessary for the in vitro assembly process of the 50S ribosomal subunit. It is not involved in the protein synthesizing functions of that subunit. The chain is Large ribosomal subunit protein bL20 from Parabacteroides distasonis (strain ATCC 8503 / DSM 20701 / CIP 104284 / JCM 5825 / NCTC 11152).